We begin with the raw amino-acid sequence, 320 residues long: MIKKIGVLTSGGDAPGMNAAIRGVVRTALSEGLEVFGVYDGYLGLYEGRIEKLDRSSVSDVINKGGTFLGSARFPEFKQVEVREKAIENLKKHGIDALVVIGGDGSYMGAKKLTEMGYPCIGLPGTIDNDIAGTDYTVGYLSALNTVIDAIDRLRDTSSSHQRISIVEIMGRHCGDLTLMSAIAGGCEYIITPETGLDKDKLISNIQDGIAKGKKHAIIALTELMMDANELARDIEAATGRETRATVLGHIQRGGRPTAFDRVLASRMGNYAVHLLLEGHGGRCVGIVKEQLVHHDIIDAIENMKRPVRNDLYKVAEELF.

Gly-12 lines the ATP pocket. Arg-22–Arg-26 contributes to the ADP binding site. Residues Arg-73–Phe-74 and Gly-103–Ser-106 contribute to the ATP site. A Mg(2+)-binding site is contributed by Asp-104. Thr-126–Asp-128 contacts substrate. Asp-128 functions as the Proton acceptor in the catalytic mechanism. Arg-155 serves as a coordination point for ADP. Substrate-binding positions include Arg-163 and Met-170–Arg-172. ADP-binding positions include Gly-186–Glu-188, Lys-212, and Lys-214–His-216. Residues Glu-223, Arg-244, and His-250–Arg-253 each bind substrate.

It belongs to the phosphofructokinase type A (PFKA) family. ATP-dependent PFK group I subfamily. Prokaryotic clade 'B1' sub-subfamily. As to quaternary structure, homotetramer. Mg(2+) is required as a cofactor.

The protein resides in the cytoplasm. The enzyme catalyses beta-D-fructose 6-phosphate + ATP = beta-D-fructose 1,6-bisphosphate + ADP + H(+). It functions in the pathway carbohydrate degradation; glycolysis; D-glyceraldehyde 3-phosphate and glycerone phosphate from D-glucose: step 3/4. Allosterically activated by ADP and other diphosphonucleosides, and allosterically inhibited by phosphoenolpyruvate. Its function is as follows. Catalyzes the phosphorylation of D-fructose 6-phosphate to fructose 1,6-bisphosphate by ATP, the first committing step of glycolysis. The chain is ATP-dependent 6-phosphofructokinase from Vibrio parahaemolyticus serotype O3:K6 (strain RIMD 2210633).